Here is a 345-residue protein sequence, read N- to C-terminus: Platelet-derived growth factor C (345 aa).

The N-terminal stretch at 1 to 22 (MLLFGFLLLTFALVSQRQGAEA) is a signal peptide. Asn25 and Asn55 each carry an N-linked (GlcNAc...) asparagine glycan. One can recognise a CUB domain in the interval 46–163 (HEKIITVSAN…PGFCIHYTLL (118 aa)). 4 disulfides stabilise this stretch: Cys104/Cys124, Cys250/Cys294, Cys280/Cys335, and Cys287/Cys337.

Belongs to the PDGF/VEGF growth factor family. In terms of assembly, homodimer; disulfide-linked. Interacts with PDGFRA homodimers, and with heterodimers formed by PDGFRA and PDGFRB. Post-translationally, proteolytic removal of the N-terminal CUB domain releasing the core domain is necessary for unmasking the receptor-binding epitopes of the core domain. Cleavage after basic residues in the hinge region (region connecting the CUB and growth factor domains) gives rise to the receptor-binding form.

The protein localises to the secreted. In terms of biological role, growth factor that plays an essential role in the regulation of embryonic development, cell proliferation, cell migration, survival and chemotaxis. Potent mitogen and chemoattractant for cells of mesenchymal origin. Required for normal skeleton formation during embryonic development. Required for normal skin morphogenesis during embryonic development. Plays an important role in wound healing, in angiogenesis and blood vessel development. The polypeptide is Platelet-derived growth factor C (PDGFC) (Gekko japonicus (Schlegel's Japanese gecko)).